The chain runs to 63 residues: UPF0337 protein SERP0494 (63 aa).

The tract at residues 1–46 (MAEDKFEQAKGNIKETVGNATDNKELEKDGKGDKASGKAKEAVENV) is disordered. Residues 22 to 46 (DNKELEKDGKGDKASGKAKEAVENV) show a composition bias toward basic and acidic residues.

The protein belongs to the UPF0337 (CsbD) family.

In Staphylococcus epidermidis (strain ATCC 35984 / DSM 28319 / BCRC 17069 / CCUG 31568 / BM 3577 / RP62A), this protein is UPF0337 protein SERP0494.